Here is a 206-residue protein sequence, read N- to C-terminus: Large ribosomal subunit protein uL4 (206 aa).

Positions 44 to 80 (KRAGTHSVKTRSTISGGGAKPWRQKGTGRARSGSNRS) are disordered.

The protein belongs to the universal ribosomal protein uL4 family. In terms of assembly, part of the 50S ribosomal subunit.

Its function is as follows. One of the primary rRNA binding proteins, this protein initially binds near the 5'-end of the 23S rRNA. It is important during the early stages of 50S assembly. It makes multiple contacts with different domains of the 23S rRNA in the assembled 50S subunit and ribosome. Functionally, forms part of the polypeptide exit tunnel. The protein is Large ribosomal subunit protein uL4 of Oleidesulfovibrio alaskensis (strain ATCC BAA-1058 / DSM 17464 / G20) (Desulfovibrio alaskensis).